Consider the following 230-residue polypeptide: V-type proton ATPase subunit E (230 aa).

It belongs to the V-ATPase E subunit family. V-ATPase is a heteromultimeric enzyme composed of a peripheral catalytic V1 complex (components A to H) attached to an integral membrane V0 proton pore complex (components: a, c, c', c'' and d).

Functionally, subunit of the peripheral V1 complex of vacuolar ATPase essential for assembly or catalytic function. V-ATPase is responsible for acidifying a variety of intracellular compartments in eukaryotic cells. In Citrus limon (Lemon), this protein is V-type proton ATPase subunit E (VATE).